The primary structure comprises 485 residues: WD repeat-containing protein 13 (485 aa).

Phosphoserine occurs at positions 70, 74, and 79. Arg-114 is subject to Asymmetric dimethylarginine; alternate. Arg-114 is subject to Omega-N-methylarginine; alternate. WD repeat units lie at residues 170–210 (HVDE…PTVL), 215–254 (GHTR…CIRE), 302–341 (KLTG…GKLT), 406–446 (HPVR…KAAV), and 451–484 (GHSA…RREQ).

Its subcellular location is the nucleus. This chain is WD repeat-containing protein 13 (WDR13), found in Pongo abelii (Sumatran orangutan).